The chain runs to 551 residues: 2-(3-amino-3-carboxypropyl)histidine synthase subunit 2 (551 aa).

C116, C137, and C371 together coordinate [4Fe-4S] cluster.

Belongs to the DPH1/DPH2 family. DPH2 subfamily. As to quaternary structure, component of the 2-(3-amino-3-carboxypropyl)histidine synthase complex composed of DPH1, DPH2, DPH3 and a NADH-dependent reductase, predominantly CBR1. [4Fe-4S] cluster serves as cofactor.

It localises to the cytoplasm. It functions in the pathway protein modification; peptidyl-diphthamide biosynthesis. Required for the first step of diphthamide biosynthesis, a post-translational modification of histidine which occurs in elongation factor 2. DPH1 and DPH2 transfer a 3-amino-3-carboxypropyl (ACP) group from S-adenosyl-L-methionine (SAM) to a histidine residue, the reaction is assisted by a reduction system comprising DPH3 and a NADH-dependent reductase, predominantly CBR1. Facilitates the reduction of the catalytic iron-sulfur cluster found in the DPH1 subunit. The chain is 2-(3-amino-3-carboxypropyl)histidine synthase subunit 2 (DPH2) from Candida glabrata (strain ATCC 2001 / BCRC 20586 / JCM 3761 / NBRC 0622 / NRRL Y-65 / CBS 138) (Yeast).